We begin with the raw amino-acid sequence, 319 residues long: Transcriptional regulator LsrR (319 aa).

Positions 32–55 (QSEISERLGLTRLKVSRLLEKGHQ) form a DNA-binding region, H-T-H motif.

The protein belongs to the SorC transcriptional regulatory family.

The protein localises to the cytoplasm. Its activity is regulated as follows. Inactivated by phosphorylated autoinducer-2 (phospho-AI-2). Phospho-AI-2 acts by binding to LsrR, which is then unable to bind to the promoter regions, allowing the transcription of the target genes. Its function is as follows. Transcriptional regulator that represses the expression of the lsr operon (lsrACDBFGE) in the absence of the quorum-sensing signaling molecule autoinducer 2 (AI-2). It also represses the expression of the lsrRK operon. Acts by binding to the intergenic region between the lsr operon and lsrR. In the presence of phosphorylated autoinducer-2 (phospho-AI-2), LsrR is inactivated, leading to the transcription of the genes. The regulatory function of LsrR was thought to be limited to the lsr operon, but it was subsequently shown to be involved, directly or indirectly, in the regulation of SPI-1 and flagella genes. It negatively regulates the expression of those genes, which reduces the ability of Salmonella to invade host cells. This Salmonella typhimurium (strain LT2 / SGSC1412 / ATCC 700720) protein is Transcriptional regulator LsrR.